Here is a 233-residue protein sequence, read N- to C-terminus: Nickel import system ATP-binding protein NikE (233 aa).

The region spanning 2-228 (IELKHVTFGY…DRHPYTKELV (227 aa)) is the ABC transporter domain. 35–42 (GESGCGKS) is an ATP binding site.

Belongs to the ABC transporter superfamily. The complex is composed of two ATP-binding proteins (NikD and NikE), two transmembrane proteins (NikB and NikC) and a solute-binding protein (NikA).

Its subcellular location is the cell membrane. It catalyses the reaction Ni(2+)(out) + ATP + H2O = Ni(2+)(in) + ADP + phosphate + H(+). Part of the ABC transporter complex NikABCDE (Opp2) involved in nickel import. Probably responsible for energy coupling to the transport system. This Staphylococcus aureus (strain MRSA252) protein is Nickel import system ATP-binding protein NikE.